The sequence spans 72 residues: Translational regulator CsrA (72 aa).

It belongs to the CsrA/RsmA family. Homodimer; the beta-strands of each monomer intercalate to form a hydrophobic core, while the alpha-helices form wings that extend away from the core.

Its subcellular location is the cytoplasm. A translational regulator that binds mRNA to regulate translation initiation and/or mRNA stability. Usually binds in the 5'-UTR at or near the Shine-Dalgarno sequence preventing ribosome-binding, thus repressing translation. Its main target seems to be the major flagellin gene, while its function is anatagonized by FliW. The sequence is that of Translational regulator CsrA from Clostridium novyi (strain NT).